The sequence spans 252 residues: PF03932 family protein CutC (252 aa).

It belongs to the CutC family.

The protein resides in the cytoplasm. In Serratia proteamaculans (strain 568), this protein is PF03932 family protein CutC.